The following is a 129-amino-acid chain: Large ribosomal subunit protein uL22 (129 aa).

This sequence belongs to the universal ribosomal protein uL22 family. In terms of assembly, part of the 50S ribosomal subunit.

This protein binds specifically to 23S rRNA; its binding is stimulated by other ribosomal proteins, e.g. L4, L17, and L20. It is important during the early stages of 50S assembly. It makes multiple contacts with different domains of the 23S rRNA in the assembled 50S subunit and ribosome. Its function is as follows. The globular domain of the protein is located near the polypeptide exit tunnel on the outside of the subunit, while an extended beta-hairpin is found that lines the wall of the exit tunnel in the center of the 70S ribosome. The sequence is that of Large ribosomal subunit protein uL22 from Prochlorococcus marinus (strain MIT 9211).